Here is a 174-residue protein sequence, read N- to C-terminus: Ribosome maturation factor RimM (174 aa).

Positions 97–169 (PDTYYDHQLE…ILEIDPPDGL (73 aa)) constitute a PRC barrel domain.

Belongs to the RimM family. In terms of assembly, binds ribosomal protein uS19.

The protein resides in the cytoplasm. An accessory protein needed during the final step in the assembly of 30S ribosomal subunit, possibly for assembly of the head region. Essential for efficient processing of 16S rRNA. May be needed both before and after RbfA during the maturation of 16S rRNA. It has affinity for free ribosomal 30S subunits but not for 70S ribosomes. The protein is Ribosome maturation factor RimM of Mycobacterium ulcerans (strain Agy99).